Reading from the N-terminus, the 70-residue chain is Small, acid-soluble spore protein alpha (70 aa).

It belongs to the alpha/beta-type SASP family.

In terms of biological role, SASP are bound to spore DNA. They are double-stranded DNA-binding proteins that cause DNA to change to an a-like conformation. They protect the DNA backbone from chemical and enzymatic cleavage and are thus involved in dormant spore's high resistance to UV light. This Paraclostridium bifermentans (Clostridium bifermentans) protein is Small, acid-soluble spore protein alpha.